We begin with the raw amino-acid sequence, 202 residues long: DNA polymerase III subunit epsilon (202 aa).

The a divalent metal cation site is built by aspartate 23 and glutamate 25. Aspartate 23 and glutamate 25 together coordinate substrate. Residue histidine 162 is the Proton acceptor of the active site. Aspartate 167 provides a ligand contact to a divalent metal cation. Position 167 (aspartate 167) interacts with substrate.

DNA polymerase III contains a core (composed of alpha, epsilon and theta chains) that associates with a tau subunit. This core dimerizes to form the POLIII' complex. PolIII' associates with the gamma complex (composed of gamma, delta, delta', psi and chi chains) and with the beta chain to form the complete DNA polymerase III complex. Mg(2+) serves as cofactor. Requires Mn(2+) as cofactor.

It catalyses the reaction DNA(n) + a 2'-deoxyribonucleoside 5'-triphosphate = DNA(n+1) + diphosphate. DNA polymerase III is a complex, multichain enzyme responsible for most of the replicative synthesis in bacteria. The epsilon subunit contain the editing function and is a proofreading 3'-5' exonuclease. This is DNA polymerase III subunit epsilon (dnaQ) from Aquifex aeolicus (strain VF5).